The chain runs to 408 residues: Succinylornithine transaminase (408 aa).

N6-(pyridoxal phosphate)lysine is present on Lys-252.

This sequence belongs to the class-III pyridoxal-phosphate-dependent aminotransferase family. AstC subfamily. Pyridoxal 5'-phosphate serves as cofactor.

It carries out the reaction N(2)-succinyl-L-ornithine + 2-oxoglutarate = N-succinyl-L-glutamate 5-semialdehyde + L-glutamate. Its pathway is amino-acid degradation; L-arginine degradation via AST pathway; L-glutamate and succinate from L-arginine: step 3/5. Its function is as follows. Catalyzes the transamination of N(2)-succinylornithine and alpha-ketoglutarate into N(2)-succinylglutamate semialdehyde and glutamate. Can also act as an acetylornithine aminotransferase. This Salmonella paratyphi B (strain ATCC BAA-1250 / SPB7) protein is Succinylornithine transaminase.